A 141-amino-acid chain; its full sequence is Putative inactive deoxyuridine 5'-triphosphate nucleotidohydrolase-like protein FLJ16323 (141 aa).

It belongs to the dUTPase family.

This Homo sapiens (Human) protein is Putative inactive deoxyuridine 5'-triphosphate nucleotidohydrolase-like protein FLJ16323.